A 466-amino-acid chain; its full sequence is Asparagine--tRNA ligase (466 aa).

Belongs to the class-II aminoacyl-tRNA synthetase family. Homodimer.

The protein localises to the cytoplasm. It carries out the reaction tRNA(Asn) + L-asparagine + ATP = L-asparaginyl-tRNA(Asn) + AMP + diphosphate + H(+). This chain is Asparagine--tRNA ligase, found in Shewanella putrefaciens (strain CN-32 / ATCC BAA-453).